A 466-amino-acid polypeptide reads, in one-letter code: MALNPDRLFSAEPGTREIARRLFASVEKLPIISPHGHTEPIWYARNEAFPDPASLFVKPDHYITRMLYSQGHSLESLGIASRDGRPSETDARKIWRLFATNWYLFRATPSRLWFEHAMETVFGITERLSQENADRIFDAIADQLTQPHMRPRALYDRFNIEAISTTDAATDPLIYHDEVIASGWHGRIIPAYRPDAAVDAGRPDFASEVEKLVGVAGTPLTWQGYLDAHRNRREYFKRRGATSSDHGHPTAQTADLSAGDASRLFDRVIKGNASTSDAEMFRAQMLTEMARMSIDDGLVMQIHPGSFRNHNPTVFERFGLDKGADIPRQTGFVDQLKPLLDAFGNDPRLTVILFTLDETAYSRELAPLAGHYPALKLGPAWWFFDSPEGILRYRKLTTETAGFYNTVGFNDDTRAYLSIPARHDMARRVDCAYLAGLVADHRLEEDEAYEVAHDLAYRLAKQTYKL.

Belongs to the metallo-dependent hydrolases superfamily. Uronate isomerase family.

The enzyme catalyses D-glucuronate = D-fructuronate. It carries out the reaction aldehydo-D-galacturonate = keto-D-tagaturonate. Its pathway is carbohydrate metabolism; pentose and glucuronate interconversion. The chain is Uronate isomerase from Brucella canis (strain ATCC 23365 / NCTC 10854 / RM-666).